The chain runs to 199 residues: Cytochrome c oxidase subunit 2 (199 aa).

The chain crosses the membrane as a helical span at residues 1–13 (AICSLVLYLLSLM). The Mitochondrial matrix segment spans residues 14-26 (LMEKLSSNTVDAQ). The chain crosses the membrane as a helical span at residues 27–54 (EVELIWTILPAIVLILLALPSLQILYMM). At 55 to 199 (DEIDEPDLTL…SSLLSSSSSL (145 aa)) the chain is on the mitochondrial intermembrane side. Residues H128, C163, E165, C167, H171, and M174 each contribute to the Cu cation site. E165 contacts Mg(2+).

It belongs to the cytochrome c oxidase subunit 2 family. In terms of assembly, component of the cytochrome c oxidase (complex IV, CIV), a multisubunit enzyme composed of 14 subunits. The complex is composed of a catalytic core of 3 subunits MT-CO1, MT-CO2 and MT-CO3, encoded in the mitochondrial DNA, and 11 supernumerary subunits COX4I, COX5A, COX5B, COX6A, COX6B, COX6C, COX7A, COX7B, COX7C, COX8 and NDUFA4, which are encoded in the nuclear genome. The complex exists as a monomer or a dimer and forms supercomplexes (SCs) in the inner mitochondrial membrane with NADH-ubiquinone oxidoreductase (complex I, CI) and ubiquinol-cytochrome c oxidoreductase (cytochrome b-c1 complex, complex III, CIII), resulting in different assemblies (supercomplex SCI(1)III(2)IV(1) and megacomplex MCI(2)III(2)IV(2)). Found in a complex with TMEM177, COA6, COX18, COX20, SCO1 and SCO2. Interacts with TMEM177 in a COX20-dependent manner. Interacts with COX20. Interacts with COX16. Cu cation is required as a cofactor.

Its subcellular location is the mitochondrion inner membrane. It carries out the reaction 4 Fe(II)-[cytochrome c] + O2 + 8 H(+)(in) = 4 Fe(III)-[cytochrome c] + 2 H2O + 4 H(+)(out). Functionally, component of the cytochrome c oxidase, the last enzyme in the mitochondrial electron transport chain which drives oxidative phosphorylation. The respiratory chain contains 3 multisubunit complexes succinate dehydrogenase (complex II, CII), ubiquinol-cytochrome c oxidoreductase (cytochrome b-c1 complex, complex III, CIII) and cytochrome c oxidase (complex IV, CIV), that cooperate to transfer electrons derived from NADH and succinate to molecular oxygen, creating an electrochemical gradient over the inner membrane that drives transmembrane transport and the ATP synthase. Cytochrome c oxidase is the component of the respiratory chain that catalyzes the reduction of oxygen to water. Electrons originating from reduced cytochrome c in the intermembrane space (IMS) are transferred via the dinuclear copper A center (CU(A)) of subunit 2 and heme A of subunit 1 to the active site in subunit 1, a binuclear center (BNC) formed by heme A3 and copper B (CU(B)). The BNC reduces molecular oxygen to 2 water molecules using 4 electrons from cytochrome c in the IMS and 4 protons from the mitochondrial matrix. The sequence is that of Cytochrome c oxidase subunit 2 (MT-CO2) from Rhea americana (Greater rhea).